Reading from the N-terminus, the 403-residue chain is GPI-N-acetylgalactosamine transferase PGAP4 (403 aa).

At Met1–Ser22 the chain is on the cytoplasmic side. A helical membrane pass occupies residues Thr23 to Cys43. The Lumenal portion of the chain corresponds to His44–Glu264. Residue Val109 coordinates UDP-N-acetyl-alpha-D-galactosamine. Cystine bridges form between Cys132-Cys136 and Cys144-Cys194. The DXD motif motif lies at Glu211–Asp213. A helical membrane pass occupies residues Trp265–Cys285. Residues Arg286–Pro287 are Cytoplasmic-facing. The chain crosses the membrane as a helical span at residues Gly288–Val308. The Lumenal segment spans residues Gly309 to Leu403. The cysteines at positions 332 and 333 are disulfide-linked. Residues Thr334, Pro335, and Lys362 each contribute to the UDP-N-acetyl-alpha-D-galactosamine site.

This sequence belongs to the PGAP4 family. Post-translationally, glycosylated.

It is found in the golgi apparatus membrane. Its function is as follows. Golgi-resident glycosylphosphatidylinositol (GPI)-N-acetylgalactosamine transferase that catalyzes the N-acetyl-beta-D-galactosamine transfer from an UDP-N-acetyl-alpha-D-galactosamine to the 4-OH-position of first mannose of the glycosylphosphatidylinositol (GPI) of a GPI-anchored protein (GPI-AP). This modification occurs after the fatty acid remodeling step of the GPI-anchor maturation. The chain is GPI-N-acetylgalactosamine transferase PGAP4 from Mus musculus (Mouse).